We begin with the raw amino-acid sequence, 127 residues long: Large ribosomal subunit protein bL17 (127 aa).

Belongs to the bacterial ribosomal protein bL17 family. Part of the 50S ribosomal subunit. Contacts protein L32.

In Photobacterium profundum (strain SS9), this protein is Large ribosomal subunit protein bL17.